The following is a 247-amino-acid chain: Trypsin (247 aa).

The N-terminal stretch at 1 to 21 is a signal peptide; that stretch reads LTTVISYFALVAFALVGVSYA. The propeptide at 22-30 is activation peptide; sequence TPKASINGR. The 217-residue stretch at 31–247 folds into the Peptidase S1 domain; that stretch reads IVGGEMTDIS…QSNFPGVYGI (217 aa). Cysteines 61 and 77 form a disulfide. Catalysis depends on charge relay system residues His-76 and Asp-120. 2 disulfides stabilise this stretch: Cys-185/Cys-201 and Cys-212/Cys-236. Ser-216 serves as the catalytic Charge relay system.

It belongs to the peptidase S1 family. In terms of tissue distribution, midgut.

The protein localises to the secreted. It localises to the extracellular space. The catalysed reaction is Preferential cleavage: Arg-|-Xaa, Lys-|-Xaa.. The chain is Trypsin from Simulium vittatum (Striped black fly).